Here is a 207-residue protein sequence, read N- to C-terminus: Small ribosomal subunit protein uS7y (207 aa).

A2 is modified (N-acetylalanine).

The protein belongs to the universal ribosomal protein uS7 family. Expressed in root tips, lateral root primordia, leaf primordia, shoot apical meristem and vasculature of cotyledons.

This is Small ribosomal subunit protein uS7y from Arabidopsis thaliana (Mouse-ear cress).